The sequence spans 160 residues: Transcription elongation factor GreA (160 aa).

The stretch at 1–31 (MAEKTYPMTLEEKEKLEKELEELKLVRRPEI) forms a coiled coil.

This sequence belongs to the GreA/GreB family.

Necessary for efficient RNA polymerase transcription elongation past template-encoded arresting sites. The arresting sites in DNA have the property of trapping a certain fraction of elongating RNA polymerases that pass through, resulting in locked ternary complexes. Cleavage of the nascent transcript by cleavage factors such as GreA or GreB allows the resumption of elongation from the new 3'terminus. GreA releases sequences of 2 to 3 nucleotides. The polypeptide is Transcription elongation factor GreA (Streptococcus suis (strain 98HAH33)).